Consider the following 192-residue polypeptide: Fe/S biogenesis protein NfuA (192 aa).

[4Fe-4S] cluster-binding residues include Cys-149 and Cys-152.

It belongs to the NfuA family. As to quaternary structure, homodimer. [4Fe-4S] cluster serves as cofactor.

In terms of biological role, involved in iron-sulfur cluster biogenesis. Binds a 4Fe-4S cluster, can transfer this cluster to apoproteins, and thereby intervenes in the maturation of Fe/S proteins. Could also act as a scaffold/chaperone for damaged Fe/S proteins. This is Fe/S biogenesis protein NfuA from Aeromonas salmonicida (strain A449).